The sequence spans 1326 residues: Putative late blight resistance protein homolog R1B-19 (1326 aa).

2 coiled-coil regions span residues 421-444 (RYSDSLAFLKNQLQVIQTEFESLQ) and 536-558 (PRMKEEIVGFEDIIENLRKKLLN). 570-577 (GMPGLGKT) is an ATP binding site. An NB-ARC domain is found at 611–864 (LLSLLCDTIG…KVKTCRLHDV (254 aa)). Residues 749 to 770 (SEMEKEVECWEQVANNLGTRIH) adopt a coiled-coil conformation. LRR repeat units lie at residues 953–978 (FKFLKVLDLEHQVFIDFIPTELVYLK), 980–996 (FSAHIKQNSIPSSIYNL), 1027–1050 (LRHLYIPDFSTENEEALLENSAKL), 1053–1070 (LETLSTPYFSRYHVLNFP), 1071–1094 (IRLEILKLYRSKAFKTIPFCISAP), 1098–1118 (YLKLSGFYLDSQYLSETADHL), 1119–1146 (KNLEVLKLYYVEFGDHREWKVSNGMFPQ), 1167–1191 (FPNLEQLYIKVENCNELVVKSAMNI), and 1208–1230 (LIEKKTLKLNLSHDEDIPKAFKR). The 70-residue stretch at 1209–1278 (IEKKTLKLNL…AWHARVVVPT (70 aa)) folds into the HMA domain.

This sequence belongs to the disease resistance NB-LRR family.

It localises to the cytoplasm. The protein localises to the membrane. Its function is as follows. Confers resistance to late blight (Phytophthora infestans) races carrying the avirulence gene Avr1. Resistance proteins guard the plant against pathogens that contain an appropriate avirulence protein via an indirect interaction with this avirulence protein. That triggers a defense system including the hypersensitive response, which restricts the pathogen growth. This Solanum demissum (Wild potato) protein is Putative late blight resistance protein homolog R1B-19 (R1B-19).